The chain runs to 109 residues: Nucleoid-associated protein Plut_1285 (109 aa).

Belongs to the YbaB/EbfC family. In terms of assembly, homodimer.

Its subcellular location is the cytoplasm. It is found in the nucleoid. Functionally, binds to DNA and alters its conformation. May be involved in regulation of gene expression, nucleoid organization and DNA protection. In Chlorobium luteolum (strain DSM 273 / BCRC 81028 / 2530) (Pelodictyon luteolum), this protein is Nucleoid-associated protein Plut_1285.